The chain runs to 421 residues: 3-phosphoshikimate 1-carboxyvinyltransferase (421 aa).

Positions 19, 20, and 24 each coordinate 3-phosphoshikimate. Lys-19 lines the phosphoenolpyruvate pocket. Residues Gly-88 and Arg-116 each contribute to the phosphoenolpyruvate site. 3-phosphoshikimate-binding residues include Ser-160, Gln-162, Asp-307, and Lys-334. Gln-162 contacts phosphoenolpyruvate. Residue Asp-307 is the Proton acceptor of the active site. Phosphoenolpyruvate-binding residues include Arg-338 and Arg-380.

The protein belongs to the EPSP synthase family. As to quaternary structure, monomer.

It localises to the cytoplasm. The catalysed reaction is 3-phosphoshikimate + phosphoenolpyruvate = 5-O-(1-carboxyvinyl)-3-phosphoshikimate + phosphate. Its pathway is metabolic intermediate biosynthesis; chorismate biosynthesis; chorismate from D-erythrose 4-phosphate and phosphoenolpyruvate: step 6/7. In terms of biological role, catalyzes the transfer of the enolpyruvyl moiety of phosphoenolpyruvate (PEP) to the 5-hydroxyl of shikimate-3-phosphate (S3P) to produce enolpyruvyl shikimate-3-phosphate and inorganic phosphate. This is 3-phosphoshikimate 1-carboxyvinyltransferase from Thermotoga neapolitana (strain ATCC 49049 / DSM 4359 / NBRC 107923 / NS-E).